A 602-amino-acid polypeptide reads, in one-letter code: Sensor histidine kinase AtsR (602 aa).

Transmembrane regions (helical) follow at residues 11-31 (IIVA…FLLF) and 182-202 (AIVM…LLLF). The Histidine kinase domain maps to 242–461 (MVSHELRTPL…EFVVTLPVEL (220 aa)). The residue at position 245 (histidine 245) is a Phosphohistidine; by autocatalysis. The region spanning 484 to 601 (HALVVDDNEN…TLNGIVSRLR (118 aa)) is the Response regulatory domain. 4-aspartylphosphate is present on aspartate 533.

The protein resides in the cell inner membrane. It catalyses the reaction ATP + protein L-histidine = ADP + protein N-phospho-L-histidine.. Functionally, member of a two-component regulatory system involved in control of gene expression; inhibits synthesis of (at least) the polyketide antibiotic thailandamide. Its two-component partner may be BTH_I0635. The protein is Sensor histidine kinase AtsR of Burkholderia thailandensis (strain ATCC 700388 / DSM 13276 / CCUG 48851 / CIP 106301 / E264).